Consider the following 464-residue polypeptide: Ribosomal protein uS12 methylthiotransferase RimO (464 aa).

An MTTase N-terminal domain is found at 14–125; it reads PTVAFAHLGC…IVEVLQRVEA (112 aa). The [4Fe-4S] cluster site is built by cysteine 23, cysteine 59, cysteine 88, cysteine 163, cysteine 167, and cysteine 170. The Radical SAM core domain maps to 149 to 378; it reads TTDQAVAFLK…MALQQPISAE (230 aa). The TRAM domain maps to 381–452; it reads HSWVSRTVDV…VYDLSGRIVG (72 aa).

The protein belongs to the methylthiotransferase family. RimO subfamily. [4Fe-4S] cluster serves as cofactor.

The protein localises to the cytoplasm. It catalyses the reaction L-aspartate(89)-[ribosomal protein uS12]-hydrogen + (sulfur carrier)-SH + AH2 + 2 S-adenosyl-L-methionine = 3-methylsulfanyl-L-aspartate(89)-[ribosomal protein uS12]-hydrogen + (sulfur carrier)-H + 5'-deoxyadenosine + L-methionine + A + S-adenosyl-L-homocysteine + 2 H(+). Its function is as follows. Catalyzes the methylthiolation of an aspartic acid residue of ribosomal protein uS12. The chain is Ribosomal protein uS12 methylthiotransferase RimO from Parasynechococcus marenigrum (strain WH8102).